We begin with the raw amino-acid sequence, 200 residues long: Recombination protein RecR (200 aa).

The segment at 57 to 72 (CRQCRTLTEQELCPQC) adopts a C4-type zinc-finger fold. The Toprim domain occupies 80-175 (TQLCVVEGPT…VASRIAHGVP (96 aa)).

The protein belongs to the RecR family.

In terms of biological role, may play a role in DNA repair. It seems to be involved in an RecBC-independent recombinational process of DNA repair. It may act with RecF and RecO. This is Recombination protein RecR from Pseudomonas putida (strain ATCC 700007 / DSM 6899 / JCM 31910 / BCRC 17059 / LMG 24140 / F1).